Here is a 638-residue protein sequence, read N- to C-terminus: Methyl-accepting chemotaxis protein McpQ (638 aa).

Residues 18-38 (LGLGFGLVLLLTLAITLTGWH) form a helical membrane-spanning segment. The HBM domain occupies 45–282 (DRGDKLGNIS…SQTEVRDAAA (238 aa)). A helical transmembrane segment spans residues 287 to 307 (TLLTVATVLALALGLLAAWAI). The 53-residue stretch at 309-361 (RQIIIPLRQTLRAAERVASGDLTQSLQVQRRDELGQLQASMHRMTQGLRELIG) folds into the HAMP domain. One can recognise a Methyl-accepting transducer domain in the interval 366 to 602 (GVTQIASAAE…EINRSVMNVR (237 aa)).

The protein belongs to the methyl-accepting chemotaxis (MCP) protein family.

The protein resides in the cell membrane. In terms of biological role, chemotactic-signal transducers respond to changes in the concentration of attractants and repellents in the environment, transduce a signal from the outside to the inside of the cell, and facilitate sensory adaptation through the variation of the level of methylation. McpQ recognizes specifically citrate and citrate/metal(2+) complexes. Binds citrate/metal(2+) complexes with higher affinity than free citrate, and mediates preferentially chemotaxis toward citrate/metal(2+) complexes. This chain is Methyl-accepting chemotaxis protein McpQ, found in Pseudomonas putida (strain ATCC 47054 / DSM 6125 / CFBP 8728 / NCIMB 11950 / KT2440).